The primary structure comprises 131 residues: MFIGVGTDIVQIPRIEKILHLYPELFAKKILTSKELAQFSLLDKTGHAVFLAKRFAAKEAVSKAFGVGIGQGINLKDITILNDNLGKPIVEVSSNYTKKLPPFNIHLSLSDDYPVCVAFAVIESSCNVISR.

Residues Asp8 and Glu59 each contribute to the Mg(2+) site.

It belongs to the P-Pant transferase superfamily. AcpS family. Requires Mg(2+) as cofactor.

It localises to the cytoplasm. The catalysed reaction is apo-[ACP] + CoA = holo-[ACP] + adenosine 3',5'-bisphosphate + H(+). In terms of biological role, transfers the 4'-phosphopantetheine moiety from coenzyme A to a Ser of acyl-carrier-protein. The polypeptide is Holo-[acyl-carrier-protein] synthase (Rickettsia felis (strain ATCC VR-1525 / URRWXCal2) (Rickettsia azadi)).